We begin with the raw amino-acid sequence, 245 residues long: Keratin-associated protein 10-12 (245 aa).

19 repeat units span residues 36-40 (CCEPP), 41-45 (CCAPA), 62-66 (CCRVT), 84-88 (CCQQS), 94-98 (CCTSS), 104-108 (CCVPV), 109-113 (CCKTV), 114-118 (CCKPV), 119-123 (CCMPV), 124-128 (CCGPS), 131-135 (CCQQS), 141-145 (CCISS), 151-155 (CCVPV), 156-160 (CCKPI), 161-165 (CCVPV), 173-177 (CCQQS), 183-187 (CCTTS), 188-192 (CCRPS), and 214-218 (CCVPT). The tract at residues 36–218 (CCEPPCCAPA…VPVPSCCVPT (183 aa)) is 19 X 5 AA repeats of C-C-X(3).

This sequence belongs to the KRTAP type 10 family. As to quaternary structure, interacts with hair keratins. As to expression, restricted to a narrow region of the hair fiber cuticle, lying approximately 20 cell layers above the apex of the dermal papilla of the hair root; not detected in any other tissues.

Its function is as follows. In the hair cortex, hair keratin intermediate filaments are embedded in an interfilamentous matrix, consisting of hair keratin-associated proteins (KRTAP), which are essential for the formation of a rigid and resistant hair shaft through their extensive disulfide bond cross-linking with abundant cysteine residues of hair keratins. The matrix proteins include the high-sulfur and high-glycine-tyrosine keratins. In Homo sapiens (Human), this protein is Keratin-associated protein 10-12 (KRTAP10-12).